Here is a 465-residue protein sequence, read N- to C-terminus: Ribulose bisphosphate carboxylase large chain (465 aa).

Lys-4 bears the N6,N6,N6-trimethyllysine mark. Residues Asn-113 and Thr-163 each contribute to the substrate site. Lys-165 acts as the Proton acceptor in catalysis. Lys-167 contacts substrate. 3 residues coordinate Mg(2+): Lys-191, Asp-193, and Glu-194. Lys-191 carries the post-translational modification N6-carboxylysine. His-284 functions as the Proton acceptor in the catalytic mechanism. Positions 285, 317, and 369 each coordinate substrate.

This sequence belongs to the RuBisCO large chain family. Type I subfamily. As to quaternary structure, heterohexadecamer of 8 large chains and 8 small chains; disulfide-linked. The disulfide link is formed within the large subunit homodimers. The cofactor is Mg(2+). In terms of processing, the disulfide bond which can form in the large chain dimeric partners within the hexadecamer appears to be associated with oxidative stress and protein turnover.

It is found in the plastid. The protein localises to the chloroplast. The catalysed reaction is 2 (2R)-3-phosphoglycerate + 2 H(+) = D-ribulose 1,5-bisphosphate + CO2 + H2O. It catalyses the reaction D-ribulose 1,5-bisphosphate + O2 = 2-phosphoglycolate + (2R)-3-phosphoglycerate + 2 H(+). RuBisCO catalyzes two reactions: the carboxylation of D-ribulose 1,5-bisphosphate, the primary event in carbon dioxide fixation, as well as the oxidative fragmentation of the pentose substrate in the photorespiration process. Both reactions occur simultaneously and in competition at the same active site. This Cornus florida (Flowering dogwood) protein is Ribulose bisphosphate carboxylase large chain.